The primary structure comprises 296 residues: Probable alpha-L-glutamate ligase (296 aa).

In terms of domain architecture, ATP-grasp spans 104–287; that stretch reads LQLLARQGID…IATLMITFIE (184 aa). ATP-binding positions include Lys-141, 178-179, Asp-187, and 211-213; these read EF and RSN. Mg(2+)-binding residues include Asp-248, Glu-260, and Asn-262. Residues Asp-248, Glu-260, and Asn-262 each coordinate Mn(2+).

It belongs to the RimK family. Mg(2+) is required as a cofactor. It depends on Mn(2+) as a cofactor.

This Sodalis glossinidius (strain morsitans) protein is Probable alpha-L-glutamate ligase.